Here is a 465-residue protein sequence, read N- to C-terminus: AYNALAPKGAPNSCEWEQNETAQVDAQELDEEENEANEAQAREQEQAKKTHVYAQAPLSGIKITKEGLQIGTADATVAGAGKEIFADKTFQPEPQVGESQWNEADATAAGGRVLKKTTPMKPCYGSYARPTNSNGGQGVLWLTNGKLESQVEMQFFSTSTNATNEVNNIQPTVVLYSEDVNMETPDTHLSYKPKMGDKNAKVSLGQQAMPNRPNYIAFRDNFIGLMYYNSTGNMGVLAGQASQLNAVVDLQDRNTELSYQLLLDSIGDRTRYFSMWNQAVDSYDPDVRIIENHGTEDELPNYCFPLGGIGITDTFQAVKTTAANGDQGNTTWQKDSTFAERNEIGVGNNFAMEINLNANLWRNFLYSNIALYLPDKLKYNPTNVDISDNPNTYDHMKRVVAPGLVDCYINLGARWSLDYMDNVNPFNHHRNAGLRYRSMLLGNGRYVPFHIQVPQKFFAIKNLLL.

Positions 1–51 are disordered; sequence AYNALAPKGAPNSCEWEQNETAQVDAQELDEEENEANEAQAREQEQAKKTH. The segment covering 15 to 24 has biased composition (polar residues); sequence EWEQNETAQV. Positions 27–36 are enriched in acidic residues; the sequence is QELDEEENEA.

This sequence belongs to the adenoviridae hexon protein family. As to quaternary structure, homotrimer. Interacts with the capsid vertex protein; this interaction binds the peripentonal hexons to the neighboring penton base. Interacts with the hexon-linking protein; this interaction tethers the hexons surrounding the penton to those situated in the central plate of the facet. Interacts with the hexon-interlacing protein; this interaction lashes the hexons together. Interacts with host dyneins DYNC1LI1 and DYNC1I2; this interaction might be involved in intracellular microtubule-dependent transport of incoming viral capsid. Interacts with the shutoff protein; this interaction allows folding and formation of hexons trimers. Interacts with pre-protein VI; this interaction probably allows nuclear import of hexon trimers and possibly pre-capsid assembly.

It is found in the virion. The protein localises to the host nucleus. In terms of biological role, major capsid protein that self-associates to form 240 hexon trimers, each in the shape of a hexagon, building most of the pseudo T=25 capsid. Assembled into trimeric units with the help of the chaperone shutoff protein. Transported by pre-protein VI to the nucleus where it associates with other structural proteins to form an empty capsid. Might be involved, through its interaction with host dyneins, in the intracellular microtubule-dependent transport of incoming viral capsid to the nucleus. The chain is Hexon protein from Homo sapiens (Human).